The chain runs to 247 residues: Protein Thf1 (247 aa).

Residues 198–224 (IAQVRQAMDDILEAQKKRREADQAKKE) are a coiled coil. The segment at 209–247 (LEAQKKRREADQAKKEGSDDTPTTEASTPDSEPTSEVSS) is disordered. Positions 210–226 (EAQKKRREADQAKKEGS) are enriched in basic and acidic residues. A compositionally biased stretch (polar residues) spans 228 to 247 (DTPTTEASTPDSEPTSEVSS).

It belongs to the THF1 family.

May be involved in photosynthetic membrane biogenesis. This chain is Protein Thf1, found in Acaryochloris marina (strain MBIC 11017).